The primary structure comprises 68 residues: Small ribosomal subunit protein bS21 (68 aa).

Positions 37–49 (EKPSEKRAREKAA) are enriched in basic and acidic residues. The disordered stretch occupies residues 37 to 68 (EKPSEKRAREKAAAVRRARKMERKRMERDGIK). The span at 50-59 (AVRRARKMER) shows a compositional bias: basic residues.

Belongs to the bacterial ribosomal protein bS21 family.

The polypeptide is Small ribosomal subunit protein bS21 (Erythrobacter litoralis (strain HTCC2594)).